The chain runs to 275 residues: Ribosomal RNA small subunit methyltransferase A (275 aa).

The S-adenosyl-L-methionine site is built by asparagine 27, leucine 29, glycine 54, glutamate 76, aspartate 102, and asparagine 123.

It belongs to the class I-like SAM-binding methyltransferase superfamily. rRNA adenine N(6)-methyltransferase family. RsmA subfamily.

It is found in the cytoplasm. The enzyme catalyses adenosine(1518)/adenosine(1519) in 16S rRNA + 4 S-adenosyl-L-methionine = N(6)-dimethyladenosine(1518)/N(6)-dimethyladenosine(1519) in 16S rRNA + 4 S-adenosyl-L-homocysteine + 4 H(+). Specifically dimethylates two adjacent adenosines (A1518 and A1519) in the loop of a conserved hairpin near the 3'-end of 16S rRNA in the 30S particle. May play a critical role in biogenesis of 30S subunits. The polypeptide is Ribosomal RNA small subunit methyltransferase A (Chelativorans sp. (strain BNC1)).